A 339-amino-acid polypeptide reads, in one-letter code: tRNA (guanine-N(7)-)-methyltransferase (339 aa).

The tract at residues 1-20 (MTPPPAKRQKRNEYRKANTA) is disordered. S-adenosyl-L-methionine-binding positions include Gly94 and 117–118 (EI). Residues 141–186 (RSSAIPSESSPAAQQPQQHHQQQLQATETAADAASPSSPDATGETL) are disordered. The span at 142–181 (SSAIPSESSPAAQQPQQHHQQQLQATETAADAASPSSPDA) shows a compositional bias: low complexity. Residues 202-203 (NT) and Cys222 each bind S-adenosyl-L-methionine. The active site involves Asp225. 311-313 (TEE) lines the S-adenosyl-L-methionine pocket.

This sequence belongs to the class I-like SAM-binding methyltransferase superfamily. TrmB family. Forms a complex with trm82.

Its subcellular location is the nucleus. The catalysed reaction is guanosine(46) in tRNA + S-adenosyl-L-methionine = N(7)-methylguanosine(46) in tRNA + S-adenosyl-L-homocysteine. The protein operates within tRNA modification; N(7)-methylguanine-tRNA biosynthesis. Its function is as follows. Catalyzes the formation of N(7)-methylguanine at position 46 (m7G46) in tRNA. This chain is tRNA (guanine-N(7)-)-methyltransferase (trm8), found in Aspergillus clavatus (strain ATCC 1007 / CBS 513.65 / DSM 816 / NCTC 3887 / NRRL 1 / QM 1276 / 107).